A 448-amino-acid chain; its full sequence is Homogentisate 1,2-dioxygenase (448 aa).

The active-site Proton acceptor is H302. Fe cation contacts are provided by H345 and E351. Residues Y360 and H381 each contribute to the homogentisate site. Fe cation is bound at residue H381.

The protein belongs to the homogentisate dioxygenase family. Hexamer; dimer of trimers. Fe cation serves as cofactor.

It catalyses the reaction homogentisate + O2 = 4-maleylacetoacetate + H(+). Its pathway is amino-acid degradation; L-phenylalanine degradation; acetoacetate and fumarate from L-phenylalanine: step 4/6. Functionally, involved in the catabolism of homogentisate (2,5-dihydroxyphenylacetate or 2,5-OH-PhAc), a central intermediate in the degradation of phenylalanine and tyrosine. Catalyzes the oxidative ring cleavage of the aromatic ring of homogentisate to yield maleylacetoacetate. This Ralstonia pickettii (strain 12J) protein is Homogentisate 1,2-dioxygenase.